Reading from the N-terminus, the 624-residue chain is MSMVRSFFDGLTNVLSGAGTSVDKRVHARYGLNIVDQHQVEASYRTSWLARKIVDMPAHDMTREWRDWKADGELIGKIEAEEKRLCLRERVTQAIVLGRLGGGAIYLGIKGDDPSQPLAVEHIRPGQLSYIAVFSRWQLTIGQEVSDPEDALFGGPDYFQITSIANKVGVRIHPSRMVIFKGAHVMRGIGSQWEDAFWGDPIYQAVGDAIRNADSAQNSFASLIDEATYDVIGIPGLMERLSQPGGDAQLSKRLDAARQGKSNHRAIILDSGEGGKDAETWVTRQVTWAGMPELMAAFLQTVAGASDIPYTRLLGTSATGMSATGEGDKNDYLSSIATKQETMLRPNMVRIDAVMLRSAGIKDELWFDWSPLFEMGEKERAALDKLKADTAKVWGDSGLVPIDALAKGAQNLLTEDGTYPGLDEELKKAEAIVAPDADVAPVVANPDDLGLTSEAKPKPLLKIVGDAAPRPLYVNRPLLNAAEFIAWAKAQGFKTTTPADDLHVTILYSKTPVDWMKMGTDGWGSDAKGNLDVAPGGARIVEPLGDKGAVVLLFTSSSLSWRHEEMVRNGASHDFDEYQSHVTISYDASDVDLSKVEPYRGVLKFGPEVFTEIVEDWKPTGGEA.

Tyrosine 106 lines the 3',3'-cGAMP pocket. Tyrosine 106 serves as a coordination point for 3',3'-cUAMP. Active-site residues include histidine 503, threonine 505, histidine 581, and threonine 583. Position 617 (tryptophan 617) interacts with 3',3'-cGAMP. Tryptophan 617 lines the 3',3'-cUAMP pocket.

It belongs to the anti-CBASS protein Acb1 family.

It catalyses the reaction 3',3'-cUAMP + H2O = U[3'-5']pAp[3'] + H(+). The catalysed reaction is 3',3',3'-c-tri-AMP + H2O = A[3'-5']pA[3'-5']pAp[3'] + H(+). It carries out the reaction 3',3',3'-cAAG + H2O = G[3'-5']pA[3'-5']pAp[3'] + H(+). The enzyme catalyses 3',3',3'-cAAG + H2O = A[3'-5']pG[3'-5']pAp[3'] + H(+). It catalyses the reaction 3',3'-cGAMP + H2O = G[3'-5']pAp[3'] + H(+). Functionally, counteracts or regulates the endogenous CBASS antiviral defense system. Phosphodiesterase that enables metal-independent hydrolysis of the host cyclic di- and trinucleotide CBASS signals such as 3'3'-cGAMP, 3'3'cUA, and 3'3'3'-cAAA. In Sphingomonas paeninsulae, this protein is Anti-CBASS protein Acb1.